Reading from the N-terminus, the 247-residue chain is UDP-2,3-diacylglucosamine hydrolase (247 aa).

Residues D8, H10, D41, N79, and H114 each coordinate Mn(2+). Residue 79–80 coordinates substrate; that stretch reads NR. The substrate site is built by D122, S160, D171, Q174, and H202. H202 and H204 together coordinate Mn(2+).

Belongs to the LpxH family. The cofactor is Mn(2+).

It localises to the cell inner membrane. The enzyme catalyses UDP-2-N,3-O-bis[(3R)-3-hydroxytetradecanoyl]-alpha-D-glucosamine + H2O = 2-N,3-O-bis[(3R)-3-hydroxytetradecanoyl]-alpha-D-glucosaminyl 1-phosphate + UMP + 2 H(+). The protein operates within glycolipid biosynthesis; lipid IV(A) biosynthesis; lipid IV(A) from (3R)-3-hydroxytetradecanoyl-[acyl-carrier-protein] and UDP-N-acetyl-alpha-D-glucosamine: step 4/6. In terms of biological role, hydrolyzes the pyrophosphate bond of UDP-2,3-diacylglucosamine to yield 2,3-diacylglucosamine 1-phosphate (lipid X) and UMP by catalyzing the attack of water at the alpha-P atom. Involved in the biosynthesis of lipid A, a phosphorylated glycolipid that anchors the lipopolysaccharide to the outer membrane of the cell. This chain is UDP-2,3-diacylglucosamine hydrolase, found in Xanthomonas campestris pv. campestris (strain B100).